A 159-amino-acid polypeptide reads, in one-letter code: Ribosomal RNA large subunit methyltransferase H (159 aa).

S-adenosyl-L-methionine is bound by residues Leu-76, Gly-108, and Phe-127 to Phe-132.

Belongs to the RNA methyltransferase RlmH family. As to quaternary structure, homodimer.

The protein localises to the cytoplasm. The catalysed reaction is pseudouridine(1915) in 23S rRNA + S-adenosyl-L-methionine = N(3)-methylpseudouridine(1915) in 23S rRNA + S-adenosyl-L-homocysteine + H(+). Functionally, specifically methylates the pseudouridine at position 1915 (m3Psi1915) in 23S rRNA. The sequence is that of Ribosomal RNA large subunit methyltransferase H from Lachnospira eligens (strain ATCC 27750 / DSM 3376 / VPI C15-48 / C15-B4) (Eubacterium eligens).